The following is a 399-amino-acid chain: Dual-specificity RNA methyltransferase RlmN (399 aa).

Glu122 (proton acceptor) is an active-site residue. Residues 128 to 371 form the Radical SAM core domain; sequence ETDRGTLCVS…VRTPRGRDIL (244 aa). Cys135 and Cys374 are oxidised to a cystine. [4Fe-4S] cluster contacts are provided by Cys142, Cys146, and Cys149. S-adenosyl-L-methionine-binding positions include 200 to 201, Ser232, 254 to 256, and Asn331; these read GE and SLH. Catalysis depends on Cys374, which acts as the S-methylcysteine intermediate.

This sequence belongs to the radical SAM superfamily. RlmN family. The cofactor is [4Fe-4S] cluster.

Its subcellular location is the cytoplasm. It catalyses the reaction adenosine(2503) in 23S rRNA + 2 reduced [2Fe-2S]-[ferredoxin] + 2 S-adenosyl-L-methionine = 2-methyladenosine(2503) in 23S rRNA + 5'-deoxyadenosine + L-methionine + 2 oxidized [2Fe-2S]-[ferredoxin] + S-adenosyl-L-homocysteine. The catalysed reaction is adenosine(37) in tRNA + 2 reduced [2Fe-2S]-[ferredoxin] + 2 S-adenosyl-L-methionine = 2-methyladenosine(37) in tRNA + 5'-deoxyadenosine + L-methionine + 2 oxidized [2Fe-2S]-[ferredoxin] + S-adenosyl-L-homocysteine. In terms of biological role, specifically methylates position 2 of adenine 2503 in 23S rRNA and position 2 of adenine 37 in tRNAs. m2A2503 modification seems to play a crucial role in the proofreading step occurring at the peptidyl transferase center and thus would serve to optimize ribosomal fidelity. The polypeptide is Dual-specificity RNA methyltransferase RlmN (Rhodopseudomonas palustris (strain ATCC BAA-98 / CGA009)).